The sequence spans 316 residues: Nautilin-63 (316 aa).

4 disordered regions span residues 1–26, 149–173, 189–238, and 259–278; these read IPDL…GPRG, PFPT…VTPF, DSRC…GIAS, and PPTS…GLNK. A compositionally biased stretch (low complexity) spans 10 to 26; the sequence is TLPVLTKGPTGLLGPRG. 3 stretches are compositionally biased toward polar residues: residues 152 to 163, 207 to 216, and 269 to 278; these read TSRSTYGPSGSQ, GHSSPATLNS, and SGYTSDGLNK.

Glycosylated; contains mainly glucose, galactose, galactosamine, glucosamine and glucuronic acid. As to expression, component of the acid-soluble organic matrix of nacreous shell layers (at protein level).

The protein localises to the secreted. In terms of biological role, involved in nacre formation. Affects morphology of calcite crystals in vitro but does not inhibit their formation. Binds chitin. This chain is Nautilin-63, found in Nautilus macromphalus (Bellybutton nautilus).